A 159-amino-acid chain; its full sequence is Crossover junction endodeoxyribonuclease RuvC (159 aa).

Residues D7, E66, and D139 contribute to the active site. 3 residues coordinate Mg(2+): D7, E66, and D139.

This sequence belongs to the RuvC family. As to quaternary structure, homodimer which binds Holliday junction (HJ) DNA. The HJ becomes 2-fold symmetrical on binding to RuvC with unstacked arms; it has a different conformation from HJ DNA in complex with RuvA. In the full resolvosome a probable DNA-RuvA(4)-RuvB(12)-RuvC(2) complex forms which resolves the HJ. The cofactor is Mg(2+).

The protein resides in the cytoplasm. The enzyme catalyses Endonucleolytic cleavage at a junction such as a reciprocal single-stranded crossover between two homologous DNA duplexes (Holliday junction).. The RuvA-RuvB-RuvC complex processes Holliday junction (HJ) DNA during genetic recombination and DNA repair. Endonuclease that resolves HJ intermediates. Cleaves cruciform DNA by making single-stranded nicks across the HJ at symmetrical positions within the homologous arms, yielding a 5'-phosphate and a 3'-hydroxyl group; requires a central core of homology in the junction. The consensus cleavage sequence is 5'-(A/T)TT(C/G)-3'. Cleavage occurs on the 3'-side of the TT dinucleotide at the point of strand exchange. HJ branch migration catalyzed by RuvA-RuvB allows RuvC to scan DNA until it finds its consensus sequence, where it cleaves and resolves the cruciform DNA. The protein is Crossover junction endodeoxyribonuclease RuvC of Sulfurovum sp. (strain NBC37-1).